The following is a 488-amino-acid chain: Leucine-rich repeat-containing protein 74A (488 aa).

LRR repeat units lie at residues Ala134 to Glu155, Tyr162 to Ser182, Ser191 to Gln212, Gln219 to Gly239, Gly247 to Asn268, Thr275 to Glu296, Cys303 to Lys324, and Ser331 to Ile351.

The sequence is that of Leucine-rich repeat-containing protein 74A from Homo sapiens (Human).